The following is a 100-amino-acid chain: Urease subunit gamma (100 aa).

It belongs to the urease gamma subunit family. In terms of assembly, heterotrimer of UreA (gamma), UreB (beta) and UreC (alpha) subunits. Three heterotrimers associate to form the active enzyme.

It is found in the cytoplasm. It carries out the reaction urea + 2 H2O + H(+) = hydrogencarbonate + 2 NH4(+). The protein operates within nitrogen metabolism; urea degradation; CO(2) and NH(3) from urea (urease route): step 1/1. The chain is Urease subunit gamma from Marinobacter nauticus (strain ATCC 700491 / DSM 11845 / VT8) (Marinobacter aquaeolei).